Consider the following 319-residue polypeptide: Acetyl-coenzyme A carboxylase carboxyl transferase subunit alpha (319 aa).

The region spanning 32-293 (NVETEVRALR…KAVLLNELDA (262 aa)) is the CoA carboxyltransferase C-terminal domain.

It belongs to the AccA family. In terms of assembly, acetyl-CoA carboxylase is a heterohexamer composed of biotin carboxyl carrier protein (AccB), biotin carboxylase (AccC) and two subunits each of ACCase subunit alpha (AccA) and ACCase subunit beta (AccD).

The protein localises to the cytoplasm. The enzyme catalyses N(6)-carboxybiotinyl-L-lysyl-[protein] + acetyl-CoA = N(6)-biotinyl-L-lysyl-[protein] + malonyl-CoA. It participates in lipid metabolism; malonyl-CoA biosynthesis; malonyl-CoA from acetyl-CoA: step 1/1. Functionally, component of the acetyl coenzyme A carboxylase (ACC) complex. First, biotin carboxylase catalyzes the carboxylation of biotin on its carrier protein (BCCP) and then the CO(2) group is transferred by the carboxyltransferase to acetyl-CoA to form malonyl-CoA. This chain is Acetyl-coenzyme A carboxylase carboxyl transferase subunit alpha, found in Xanthomonas axonopodis pv. citri (strain 306).